The sequence spans 547 residues: Chaperonin GroEL (547 aa).

Residues 30 to 33, Lys51, 87 to 91, Gly415, 479 to 481, and Asp495 each bind ATP; these read TLGP, DGTTT, and NAA. The disordered stretch occupies residues 526–547; sequence KEEKSDLSVPPQGGMGGMGGMM. The span at 538–547 shows a compositional bias: gly residues; it reads GGMGGMGGMM.

This sequence belongs to the chaperonin (HSP60) family. As to quaternary structure, forms a cylinder of 14 subunits composed of two heptameric rings stacked back-to-back. Interacts with the co-chaperonin GroES.

Its subcellular location is the cytoplasm. It catalyses the reaction ATP + H2O + a folded polypeptide = ADP + phosphate + an unfolded polypeptide.. Together with its co-chaperonin GroES, plays an essential role in assisting protein folding. The GroEL-GroES system forms a nano-cage that allows encapsulation of the non-native substrate proteins and provides a physical environment optimized to promote and accelerate protein folding. The polypeptide is Chaperonin GroEL (Buchnera aphidicola subsp. Tetraneura caerulescens).